Consider the following 211-residue polypeptide: Urease accessory protein UreG (211 aa).

Position 12–19 (12–19) interacts with GTP; that stretch reads GPVGAGKT.

The protein belongs to the SIMIBI class G3E GTPase family. UreG subfamily. Homodimer. UreD, UreF and UreG form a complex that acts as a GTP-hydrolysis-dependent molecular chaperone, activating the urease apoprotein by helping to assemble the nickel containing metallocenter of UreC. The UreE protein probably delivers the nickel.

The protein localises to the cytoplasm. Its function is as follows. Facilitates the functional incorporation of the urease nickel metallocenter. This process requires GTP hydrolysis, probably effectuated by UreG. The protein is Urease accessory protein UreG of Paracoccus denitrificans (strain Pd 1222).